Reading from the N-terminus, the 309-residue chain is Probable nitrogen assimilation transcriptional activator (309 aa).

Residues 1–57 (MRLEQLQAFLKVAELGSFQQAALQSEVTQSTISRQIQGLESALKCQLFHRGAQAKLT) form the HTH lysR-type domain. Positions 18–38 (FQQAALQSEVTQSTISRQIQG) form a DNA-binding region, H-T-H motif.

This sequence belongs to the LysR transcriptional regulatory family.

Functionally, seems to regulate utilization of fixed nitrogen by controlling the expression of a certain gene(s) involved in nitrogen metabolism. This is Probable nitrogen assimilation transcriptional activator (ntcB) from Synechocystis sp. (strain ATCC 27184 / PCC 6803 / Kazusa).